Reading from the N-terminus, the 1481-residue chain is Cystic fibrosis transmembrane conductance regulator (1481 aa).

At 1–77 (MQKSPLVKAS…KLINALRRCF (77 aa)) the chain is on the cytoplasmic side. A helical membrane pass occupies residues 78-98 (LWRFIFYGILLYLGEVTKAVQ). The ABC transmembrane type-1 1 domain occupies 81–365 (FIFYGILLYL…GAVQTWYDSL (285 aa)). At 99 to 122 (PLLLGRIIASYDPDNKEERSIAIY) the chain is on the extracellular side. Residues 123 to 146 (LAIGLCLLFIVRTLLLHPAIFGLQ) traverse the membrane as a helical segment. The Cytoplasmic segment spans residues 147 to 195 (HIGMQMRIAMFSLIYKKTLKLSSRVLDKISIGQLVSLLSNNLNKFDEGL). Residues 196 to 216 (ALAHFVWIAPLQVTLLMGLLW) form a helical membrane-spanning segment. The Extracellular portion of the chain corresponds to 217-222 (DLLQAS). A helical membrane pass occupies residues 223 to 243 (AFCGLAVLIVLALFQAWLGKM). At 244 to 298 (MMKYRDQRAGKINERLVITSEMIENIQSVKAYCWEEAMEKMIENLRQTELKLTRK) the chain is on the cytoplasmic side. Residues 299 to 319 (AAYMRYFNSAAFFFSGFFVVF) form a helical membrane-spanning segment. Residues 320–339 (LSVLPYAFLQGIILRKIFTT) are Extracellular-facing. A helical membrane pass occupies residues 340-358 (ISFCIVLRMAITRQFPGAV). Topologically, residues 359-859 (QTWYDSLGAI…YLRYITVHKS (501 aa)) are cytoplasmic. ATP is bound by residues W401, S435, 459-466 (GSTGAGKT), and Q494. The 224-residue stretch at 424 to 647 (NGDNKLFFSN…RPDFSSKLMG (224 aa)) folds into the ABC transporter 1 domain. Residue C525 is the site of S-palmitoyl cysteine attachment. At S550 the chain carries Phosphoserine. A disordered R region region spans residues 655-832 (SAERRNSILT…EEINEEDLKE (178 aa)). Residues S661 and S671 each carry the phosphoserine; by PKA modification. S687 carries the phosphoserine; by PKC modification. A Glycyl lysine isopeptide (Lys-Gly) (interchain with G-Cter in ubiquitin) cross-link involves residue K689. S701 and S713 each carry phosphoserine; by PKA. T718 bears the Phosphothreonine mark. Phosphoserine; by PKA occurs at positions 738, 769, 796, and 814. Residues 860 to 880 (LILVLIWCLIIFLAEVAASLV) form a helical membrane-spanning segment. Residues 860 to 1156 (LILVLIWCLI…AVNSSIDVDS (297 aa)) form the ABC transmembrane type-1 2 domain. Topologically, residues 881-919 (VLWLLKNNTPQQEMNSTQSGNRSYPVIITNTSFYYIFYI) are extracellular. N-linked (GlcNAc...) asparagine glycosylation is found at N895 and N901. A discontinuously helical transmembrane segment spans residues 920–940 (YVGVADTLLALGLFRGLPLVH). Topologically, residues 941-991 (TLITVSKILHHKMLRSVLQAPMSTLNALKAGGILNRFSKDIAILDDLLPLT) are cytoplasmic. The chain crosses the membrane as a helical span at residues 992-1012 (IFDFIQLLLIVIGAIAVVSVL). At 1013 to 1014 (QP) the chain is on the extracellular side. The helical transmembrane segment at 1015-1035 (YIFLATVPVIAAFIMLRAYFL) threads the bilayer. Topologically, residues 1036 to 1096 (HTSQQLKQLE…TANWFLYLST (61 aa)) are cytoplasmic. The chain crosses the membrane as a helical span at residues 1097 to 1117 (LRWFQMRIEMIFVIFFIAVTF). Over 1118–1131 (ISILTTGEGQGSVG) the chain is Extracellular. A helical membrane pass occupies residues 1132-1152 (IILTLAMNIMSTLQWAVNSSI). Over 1153 to 1481 (DVDSLMRSVS…TEEEVQETRL (329 aa)) the chain is Cytoplasmic. An ABC transporter 2 domain is found at 1211-1444 (MIVKDLTAKY…KSLFRQAISS (234 aa)). Residues Y1220 and 1245–1252 (GRTGSGKS) contribute to the ATP site. The segment at 1387 to 1481 (RTIKQAFADC…TEEEVQETRL (95 aa)) is interaction with GORASP2. The S-palmitoyl cysteine moiety is linked to residue C1396. A phosphoserine mark is found at S1445 and S1457. Basic residues predominate over residues 1453–1462 (HRNSSKHKSR). The segment at 1453–1481 (HRNSSKHKSRSQITALKEETEEEVQETRL) is disordered. Residues 1471–1481 (ETEEEVQETRL) are compositionally biased toward acidic residues. The PDZ-binding motif lies at 1479–1481 (TRL).

This sequence belongs to the ABC transporter superfamily. ABCC family. CFTR transporter (TC 3.A.1.202) subfamily. As to quaternary structure, monomer; does not require oligomerization for channel activity. May form oligomers in the membrane. Interacts with SLC26A3, SLC26A6 and NHERF1. Interacts with SHANK2. Interacts with MYO6. Interacts (via C-terminus) with GOPC (via PDZ domain); this promotes CFTR internalization and thereby decreases channel activity. Interacts with SLC4A7 through NHERF1. Found in a complex with MYO5B and RAB11A. Interacts with ANO1. Interacts with SLC26A8. Interacts with AHCYL1; the interaction increases CFTR activity. Interacts with CSE1L. The core-glycosylated form interacts with GORASP2 (via PDZ GRASP-type 1 domain) in respone to ER stress. Interacts with MARCHF2; the interaction leads to CFTR ubiqtuitination and degradation. Interacts with ADGRG2. In terms of processing, N-glycosylated. Phosphorylated; cAMP treatment promotes phosphorylation and activates the channel. Dephosphorylation decreases the ATPase activity (in vitro). Phosphorylation at PKA sites activates the channel. Phosphorylation at PKC sites enhances the response to phosphorylation by PKA. Phosphorylated by AMPK; this inhibits channel activity. Post-translationally, ubiquitinated, leading to its degradation in the lysosome. Deubiquitination by USP10 in early endosomes enhances its endocytic recycling to the cell membrane. Ubiquitinated by RNF185 during ER stress. Ubiquitinated by MARCHF2.

The protein resides in the apical cell membrane. Its subcellular location is the early endosome membrane. It is found in the cell membrane. It localises to the recycling endosome membrane. The protein localises to the endoplasmic reticulum membrane. The protein resides in the nucleus. It catalyses the reaction ATP + H2O + closed Cl(-) channel = ADP + phosphate + open Cl(-) channel.. It carries out the reaction chloride(in) = chloride(out). The enzyme catalyses hydrogencarbonate(in) = hydrogencarbonate(out). The catalysed reaction is ATP + H2O = ADP + phosphate + H(+). In terms of biological role, epithelial ion channel that plays an important role in the regulation of epithelial ion and water transport and fluid homeostasis. Mediates the transport of chloride ions across the cell membrane. Possesses an intrinsic ATPase activity and utilizes ATP to gate its channel; the passive flow of anions through the channel is gated by cycles of ATP binding and hydrolysis by the ATP-binding domains. The ion channel is also permeable to HCO(3)(-); selectivity depends on the extracellular chloride concentration. Exerts its function also by modulating the activity of other ion channels and transporters. Contributes to the regulation of the pH and the ion content of the epithelial fluid layer. Modulates the activity of the epithelial sodium channel (ENaC) complex, in part by regulating the cell surface expression of the ENaC complex. May regulate bicarbonate secretion and salvage in epithelial cells by regulating the transporter SLC4A7. Can inhibit the chloride channel activity of ANO1. Plays a role in the chloride and bicarbonate homeostasis during sperm epididymal maturation and capacitation. The sequence is that of Cystic fibrosis transmembrane conductance regulator from Cavia porcellus (Guinea pig).